The chain runs to 159 residues: uncharacterized protein (159 aa).

The HTH asnC-type domain maps to 6–66 (LSKKDWEIIK…YLRFDKLGYT (61 aa)). Residues 25–44 (DAEIGRRIGLSKSAVRWRRI) constitute a DNA-binding region (H-T-H motif).

This is an uncharacterized protein from Pyrococcus horikoshii (strain ATCC 700860 / DSM 12428 / JCM 9974 / NBRC 100139 / OT-3).